We begin with the raw amino-acid sequence, 343 residues long: Heat-inducible transcription repressor HrcA (343 aa).

It belongs to the HrcA family.

In terms of biological role, negative regulator of class I heat shock genes (grpE-dnaK-dnaJ and groELS operons). Prevents heat-shock induction of these operons. This is Heat-inducible transcription repressor HrcA from Caldanaerobacter subterraneus subsp. tengcongensis (strain DSM 15242 / JCM 11007 / NBRC 100824 / MB4) (Thermoanaerobacter tengcongensis).